Reading from the N-terminus, the 336-residue chain is E3 ubiquitin-protein ligase RING2 (336 aa).

Residues 2–179 (TQTVQTNGVQ…AEDNGDSSHC (178 aa)) form an interaction with HIP2 region. Residues 51 to 91 (CPICLDMLKNTMTTKECLHRFCADCIITALRSGNKECPTCR) form an RING-type zinc finger. An interaction with nucleosomes via an acidic patch on histone H2A and histone H2B region spans residues 93–98 (KLVSKR). The tract at residues 158–218 (RGKKHQIENG…NATENGGGDI (61 aa)) is disordered. Residues 176-190 (SSHCSNASVHSNQEA) show a composition bias toward polar residues.

In terms of assembly, component of chromatin-associated Polycomb (PcG) complexes. Component of a PRC1-like complex. Component of some MLL1/MLL complex.

Its subcellular location is the nucleus. It localises to the cytoplasm. The protein resides in the chromosome. It carries out the reaction S-ubiquitinyl-[E2 ubiquitin-conjugating enzyme]-L-cysteine + [acceptor protein]-L-lysine = [E2 ubiquitin-conjugating enzyme]-L-cysteine + N(6)-ubiquitinyl-[acceptor protein]-L-lysine.. Its pathway is protein modification; protein ubiquitination. E3 ubiquitin-protein ligase that mediates monoubiquitination of 'Lys-119' of histone H2A (H2AK119Ub), thereby playing a central role in histone code and gene regulation. H2AK119Ub gives a specific tag for epigenetic transcriptional repression. Essential component of a Polycomb group (PcG) multiprotein PRC1-like complex, a complex class required to maintain the transcriptionally repressive state of many genes, including Hox genes, throughout development. PcG PRC1 complex acts via chromatin remodeling and modification of histones, rendering chromatin heritably changed in its expressibility. This chain is E3 ubiquitin-protein ligase RING2 (rnf2), found in Danio rerio (Zebrafish).